A 208-amino-acid polypeptide reads, in one-letter code: LexA repressor (208 aa).

Positions 30–50 (VREICAAVKLSSTSTVHGHLA) form a DNA-binding region, H-T-H motif. Active-site for autocatalytic cleavage activity residues include Ser-129 and Lys-167.

It belongs to the peptidase S24 family. In terms of assembly, homodimer.

It carries out the reaction Hydrolysis of Ala-|-Gly bond in repressor LexA.. Functionally, represses a number of genes involved in the response to DNA damage (SOS response), including recA and lexA. In the presence of single-stranded DNA, RecA interacts with LexA causing an autocatalytic cleavage which disrupts the DNA-binding part of LexA, leading to derepression of the SOS regulon and eventually DNA repair. In Lactobacillus helveticus (strain DPC 4571), this protein is LexA repressor.